The sequence spans 548 residues: Terpene synthase 1 (548 aa).

Mg(2+) contacts are provided by Asp301, Asp305, Asp445, and Glu453. The DDXXD motif motif lies at 301–305; it reads DDTYD.

Belongs to the terpene synthase family. Tpsa subfamily. The cofactor is Mg(2+). Mn(2+) serves as cofactor.

It carries out the reaction (2E,6E)-farnesyl diphosphate = (+)-valencene + diphosphate. It functions in the pathway secondary metabolite biosynthesis; terpenoid biosynthesis. Sesquiterpene synthase involved in the biosynthesis of volatile compounds which contribute to fruit flavor and aroma. Mediates the conversion of (2E,6E)-farnesyl diphosphate (FPP) into (+)-valencene. No activity detected with geranyl diphosphate (GPP). This Citrus sinensis (Sweet orange) protein is Terpene synthase 1.